We begin with the raw amino-acid sequence, 499 residues long: Protein phosphatase PP2A 55 kDa regulatory subunit (499 aa).

The interval 1 to 30 is disordered; the sequence is MGRWGRQSPVLEPPDPQMQTTPPPPTLPPR. Positions 11-28 are enriched in pro residues; that stretch reads LEPPDPQMQTTPPPPTLP. 7 WD repeats span residues 79 to 118, 144 to 185, 228 to 266, 277 to 317, 336 to 374, 391 to 432, and 467 to 498; these read TDAD…KAAN, EIEE…KSFG, AHTY…QSYN, ELTE…LCDR, EIIS…KPIE, ENDC…DVTL, and DFNK…FQDK.

The protein belongs to the phosphatase 2A regulatory subunit B family. In terms of assembly, PP2A exists in several trimeric forms, all of which consist of a core composed of a catalytic subunit associated with a 65 kDa regulatory subunit (PR65) (subunit A). The core complex associates with a third, variable subunit (subunit B), which confers distinct properties to the holoenzyme.

Functionally, could perform a substrate recognition function or could be responsible for targeting the enzyme complex to the appropriate subcellular compartment. The protein is Protein phosphatase PP2A 55 kDa regulatory subunit (tws) of Drosophila melanogaster (Fruit fly).